Consider the following 497-residue polypeptide: Probable cytosol aminopeptidase (497 aa).

Mn(2+)-binding residues include K267 and D272. Residue K279 is part of the active site. Mn(2+) contacts are provided by D290, D349, and E351. Residue R353 is part of the active site.

It belongs to the peptidase M17 family. Mn(2+) is required as a cofactor.

The protein resides in the cytoplasm. The enzyme catalyses Release of an N-terminal amino acid, Xaa-|-Yaa-, in which Xaa is preferably Leu, but may be other amino acids including Pro although not Arg or Lys, and Yaa may be Pro. Amino acid amides and methyl esters are also readily hydrolyzed, but rates on arylamides are exceedingly low.. It carries out the reaction Release of an N-terminal amino acid, preferentially leucine, but not glutamic or aspartic acids.. In terms of biological role, presumably involved in the processing and regular turnover of intracellular proteins. Catalyzes the removal of unsubstituted N-terminal amino acids from various peptides. This chain is Probable cytosol aminopeptidase, found in Syntrophotalea carbinolica (strain DSM 2380 / NBRC 103641 / GraBd1) (Pelobacter carbinolicus).